A 156-amino-acid chain; its full sequence is Large ribosomal subunit protein uL22 (156 aa).

It belongs to the universal ribosomal protein uL22 family. In terms of assembly, part of the 50S ribosomal subunit.

Functionally, this protein binds specifically to 23S rRNA. It makes multiple contacts with different domains of the 23S rRNA in the assembled 50S subunit and ribosome. The globular domain of the protein is located near the polypeptide exit tunnel on the outside of the subunit, while an extended beta-hairpin is found that lines the wall of the exit tunnel in the center of the 70S ribosome. This is Large ribosomal subunit protein uL22 from Sulfolobus acidocaldarius (strain ATCC 33909 / DSM 639 / JCM 8929 / NBRC 15157 / NCIMB 11770).